The chain runs to 78 residues: MALIRKTFYFLFAMFFILVQLPSGCQAGLDFSQPFPSGEFAVCESCKLGRGKCRKECLENEKPDGNCRLNFLCCRQRI.

Positions 1–27 are cleaved as a signal peptide; sequence MALIRKTFYFLFAMFFILVQLPSGCQA. Intrachain disulfides connect C43/C74, C53/C67, and C57/C73.

It belongs to the beta-defensin family. As to expression, specifically expressed in testis.

The protein resides in the secreted. Has antibacterial activity. The sequence is that of Beta-defensin 105 (DEFB105A) from Homo sapiens (Human).